A 243-amino-acid polypeptide reads, in one-letter code: Variant surface antigen E (243 aa).

The signal sequence occupies residues 1 to 29 (MKKSIFSKKLLVSFGSLVTLAAIPLIAIS). C30 carries N-palmitoyl cysteine lipidation. The S-diacylglycerol cysteine moiety is linked to residue C30. The interval 34 to 243 (TDNLSQSQQP…TTSDGQNQNK (210 aa)) is disordered. A compositionally biased stretch (low complexity) spans 52 to 92 (GTNTENGSNNGSGSGTTNSSGGTNQSGSASGNGSSNSSVST). The segment covering 93–243 (PDGQHSNPSN…TTSDGQNQNK (151 aa)) has biased composition (polar residues). Repeat copies occupy residues 97 to 109 (HSNP…SDPK), 110 to 122 (ESNP…SDPK), 123 to 135 (ESNP…SDGQ), 136 to 148 (HSNP…SDPK), 149 to 161 (ESNP…SDGQ), 162 to 174 (HSNP…SDGQ), 175 to 187 (HSNP…SDGQ), 188 to 200 (HSNP…SDGQ), 201 to 213 (HSNP…SDGQ), 214 to 226 (HSNP…SDGQ), and 227 to 239 (HSNP…SDGQ). Positions 97–239 (HSNPSNPTTS…PSNPTTSDGQ (143 aa)) are 11 X 13 AA tandem repeats.

The protein resides in the cell membrane. Its function is as follows. Responsible for the antigenic diversity for host adaptation. Expression in E.coli of a construct containing vlpD, vlpE, and vlpF yields antigenically distinguishable products corresponding to each gene. The chain is Variant surface antigen E (vlpE) from Mesomycoplasma hyorhinis (Mycoplasma hyorhinis).